Consider the following 348-residue polypeptide: UPF0283 membrane protein PBPRA2435 (348 aa).

A run of 3 helical transmembrane segments spans residues glycine 71–alanine 91, tryptophan 97–leucine 117, and glutamate 211–tryptophan 231.

The protein belongs to the UPF0283 family.

The protein localises to the cell inner membrane. The protein is UPF0283 membrane protein PBPRA2435 of Photobacterium profundum (strain SS9).